The following is an 88-amino-acid chain: Sapecin-B (88 aa).

An N-terminal signal peptide occupies residues 1–24 (MKFLTSLLLLFVVVMVSAVNLSMA). A propeptide spanning residues 25–54 (KESANQLTERLQELDGAAIQEPAELNRHKR) is cleaved from the precursor. Disulfide bonds link Cys57–Cys78, Cys64–Cys84, and Cys68–Cys86.

This sequence belongs to the invertebrate defensin family. Type 1 subfamily. Hemocytes and fat body.

It localises to the secreted. Sapecins, which are potent bactericidal proteins, are produced in response to injury. Sapecin B is cytotoxic to Gram-positive bacteria. The chain is Sapecin-B from Sarcophaga peregrina (Flesh fly).